Consider the following 219-residue polypeptide: Protein-methionine-sulfoxide reductase heme-binding subunit MsrQ (219 aa).

5 helical membrane-spanning segments follow: residues 17–37 (AKPL…YAAW), 88–108 (LFAY…DMGF), 121–141 (PFIL…ATSF), 153–173 (WQLL…HFFW), and 184–204 (VFVY…NHWA).

Belongs to the MsrQ family. As to quaternary structure, heterodimer of a catalytic subunit (MsrP) and a heme-binding subunit (MsrQ). FMN serves as cofactor. Heme b is required as a cofactor.

The protein resides in the cell inner membrane. In terms of biological role, part of the MsrPQ system that repairs oxidized periplasmic proteins containing methionine sulfoxide residues (Met-O), using respiratory chain electrons. Thus protects these proteins from oxidative-stress damage caused by reactive species of oxygen and chlorine generated by the host defense mechanisms. MsrPQ is essential for the maintenance of envelope integrity under bleach stress, rescuing a wide series of structurally unrelated periplasmic proteins from methionine oxidation. MsrQ provides electrons for reduction to the reductase catalytic subunit MsrP, using the quinone pool of the respiratory chain. This is Protein-methionine-sulfoxide reductase heme-binding subunit MsrQ from Polaromonas naphthalenivorans (strain CJ2).